The sequence spans 238 residues: Ribosomal RNA small subunit methyltransferase G (238 aa).

S-adenosyl-L-methionine is bound by residues Gly78, Phe83, 129-130 (AE), and Arg148. The disordered stretch occupies residues 217 to 238 (KKKETPKKYPRKAGTPAKSPIK).

It belongs to the methyltransferase superfamily. RNA methyltransferase RsmG family.

It is found in the cytoplasm. Functionally, specifically methylates the N7 position of a guanine in 16S rRNA. The polypeptide is Ribosomal RNA small subunit methyltransferase G (Lactococcus lactis subsp. cremoris (strain SK11)).